Here is a 333-residue protein sequence, read N- to C-terminus: Ribokinase (333 aa).

Residues 10-12 (NYD), 38-42 (GKGLN), and glutamate 149 contribute to the substrate site. Residues asparagine 193 and 248 to 253 (TLGSRG) each bind ATP. Aspartate 277 and threonine 279 together coordinate K(+). Residue 282-283 (GD) participates in ATP binding. Aspartate 283 contacts substrate. The active-site Proton acceptor is the aspartate 283. Residues threonine 313, arginine 316, glycine 318, and serine 322 each coordinate K(+).

This sequence belongs to the carbohydrate kinase PfkB family. Ribokinase subfamily. As to quaternary structure, homodimer. Requires Mg(2+) as cofactor.

The protein localises to the cytoplasm. Its subcellular location is the nucleus. It catalyses the reaction D-ribose + ATP = D-ribose 5-phosphate + ADP + H(+). It functions in the pathway carbohydrate metabolism; D-ribose degradation; D-ribose 5-phosphate from beta-D-ribopyranose: step 2/2. Activated by a monovalent cation that binds near, but not in, the active site. The most likely occupant of the site in vivo is potassium. Ion binding induces a conformational change that may alter substrate affinity. In terms of biological role, catalyzes the phosphorylation of ribose at O-5 in a reaction requiring ATP and magnesium. The resulting D-ribose-5-phosphate can then be used either for sythesis of nucleotides, histidine, and tryptophan, or as a component of the pentose phosphate pathway. The protein is Ribokinase of Saccharomyces cerevisiae (strain ATCC 204508 / S288c) (Baker's yeast).